The chain runs to 189 residues: DnaJ homolog subfamily C member 5G (189 aa).

Residues 17–98 form the J domain; it reads SLYAVLDLKK…KKRKIYDQHG (82 aa). The interval 154–189 is disordered; it reads PEQDSGRKYQQNVQSQPPRSGAKCDFRSEENSEDDF. The segment covering 161 to 171 has biased composition (polar residues); it reads KYQQNVQSQPP.

In terms of processing, palmitoylated. Testis specific.

Its subcellular location is the membrane. The protein is DnaJ homolog subfamily C member 5G (DNAJC5G) of Homo sapiens (Human).